Reading from the N-terminus, the 234-residue chain is Triggering receptor expressed on myeloid cells 1 (234 aa).

An N-terminal signal peptide occupies residues 1–20; the sequence is MRKTRLWGLLWMLFVSELRA. Residues 21 to 205 are Extracellular-facing; the sequence is ATKLTEEKYE…TDIIRVPVFN (185 aa). In terms of domain architecture, Ig-like V-type spans 26–134; that stretch reads EEKYELKEGQ…LFDRIRLVVT (109 aa). A disulfide bond links Cys-41 and Cys-113. 3 N-linked (GlcNAc...) asparagine glycosylation sites follow: Asn-146, Asn-191, and Asn-194. Residues 206-226 traverse the membrane as a helical segment; the sequence is IVILLAGGFLSKSLVFSVLFA. The Cytoplasmic portion of the chain corresponds to 227-234; it reads VTLRSFVP.

In terms of assembly, monomer. Homomultimer; when activated. Interacts with TYROBP/DAP12. Interacts with TLR4. Glycosylated. In terms of tissue distribution, mostly expressed by immune cells of the myeloid lineage, such as monocytes, macrophages, neutrophils and dendritic cells. Expression is associated with a mature stage of myeloid development. Highly expressed in adult liver, lung and spleen than in corresponding fetal tissue. Also expressed in the lymph node, placenta, spinal cord and heart tissues. Isoform 2 was detected in the lung, liver and mature monocytes.

The protein resides in the cell membrane. The protein localises to the secreted. In terms of biological role, cell surface receptor that plays important roles in innate and adaptive immunity by amplifying inflammatory responses. Upon activation by various ligands such as PGLYRP1, HMGB1 or HSP70, multimerizes and forms a complex with transmembrane adapter TYROBP/DAP12. In turn, initiates a SYK-mediated cascade of tyrosine phosphorylation, activating multiple downstream mediators such as BTK, MAPK1, MAPK3 or phospholipase C-gamma. This cascade promotes the neutrophil- and macrophage-mediated release of pro-inflammatory cytokines and/or chemokines, as well as their migration and thereby amplifies inflammatory responses that are triggered by bacterial and fungal infections. By also promoting the amplification of inflammatory signals that are initially triggered by Toll-like receptor (TLR) and NOD-like receptor engagement, plays a major role in the pathophysiology of acute and chronic inflammatory diseases of different etiologies including septic shock and atherosclerosis. Acts as a decoy receptor, counterbalancing TREM1 pro-inflammatory activity through the neutralization of its ligand. This Homo sapiens (Human) protein is Triggering receptor expressed on myeloid cells 1 (TREM1).